Consider the following 66-residue polypeptide: UPF0337 protein pc0632 (66 aa).

Belongs to the UPF0337 (CsbD) family.

The sequence is that of UPF0337 protein pc0632 from Protochlamydia amoebophila (strain UWE25).